The chain runs to 253 residues: Imidazole glycerol phosphate synthase subunit HisF (253 aa).

Catalysis depends on residues D11 and D130.

This sequence belongs to the HisA/HisF family. Heterodimer of HisH and HisF.

The protein resides in the cytoplasm. It catalyses the reaction 5-[(5-phospho-1-deoxy-D-ribulos-1-ylimino)methylamino]-1-(5-phospho-beta-D-ribosyl)imidazole-4-carboxamide + L-glutamine = D-erythro-1-(imidazol-4-yl)glycerol 3-phosphate + 5-amino-1-(5-phospho-beta-D-ribosyl)imidazole-4-carboxamide + L-glutamate + H(+). Its pathway is amino-acid biosynthesis; L-histidine biosynthesis; L-histidine from 5-phospho-alpha-D-ribose 1-diphosphate: step 5/9. IGPS catalyzes the conversion of PRFAR and glutamine to IGP, AICAR and glutamate. The HisF subunit catalyzes the cyclization activity that produces IGP and AICAR from PRFAR using the ammonia provided by the HisH subunit. The protein is Imidazole glycerol phosphate synthase subunit HisF of Dehalococcoides mccartyi (strain CBDB1).